A 380-amino-acid polypeptide reads, in one-letter code: Cytochrome b (380 aa).

The next 4 helical transmembrane spans lie at 33–53 (FGSL…FLAM), 77–98 (WLIR…YLHI), 113–133 (WNVG…GYVL), and 178–198 (FFAF…IHLI). 2 residues coordinate heme b: His-83 and His-97. Heme b-binding residues include His-182 and His-196. His-201 provides a ligand contact to a ubiquinone. 4 helical membrane-spanning segments follow: residues 226-246 (YKDL…ALFS), 288-308 (LGGV…PILH), 320-340 (FSQF…WIGG), and 347-367 (FVII…VMIP).

This sequence belongs to the cytochrome b family. In terms of assembly, the cytochrome bc1 complex contains 3 respiratory subunits (MT-CYB, CYC1 and UQCRFS1), 2 core proteins (UQCRC1 and UQCRC2) and probably 6 low-molecular weight proteins. The cofactor is heme b.

The protein resides in the mitochondrion inner membrane. Its function is as follows. Component of the ubiquinol-cytochrome c reductase complex (complex III or cytochrome b-c1 complex) that is part of the mitochondrial respiratory chain. The b-c1 complex mediates electron transfer from ubiquinol to cytochrome c. Contributes to the generation of a proton gradient across the mitochondrial membrane that is then used for ATP synthesis. This Paralichthys olivaceus (Bastard halibut) protein is Cytochrome b (mt-cyb).